The primary structure comprises 1609 residues: Laminin subunit gamma-1 (1609 aa).

The N-terminal stretch at 1–33 is a signal peptide; it reads MRGSHRAAPALRPRGRLWPVLAVLAAAAAAGCA. The Laminin N-terminal domain occupies 46–285; that stretch reads RPQRCMPEFV…AISDFAVGGR (240 aa). Asn60 and Asn134 each carry an N-linked (GlcNAc...) asparagine glycan. 16 cysteine pairs are disulfide-bonded: Cys286/Cys295, Cys288/Cys305, Cys307/Cys316, Cys319/Cys339, Cys342/Cys351, Cys344/Cys367, Cys370/Cys379, Cys382/Cys395, Cys398/Cys410, Cys400/Cys416, Cys418/Cys427, Cys430/Cys442, Cys445/Cys456, Cys447/Cys463, Cys465/Cys474, and Cys477/Cys492. Laminin EGF-like domains follow at residues 286-341, 342-397, 398-444, and 445-494; these read CKCN…ECLP, CDCN…ACSS, CHCS…GCRP, and CSCD…GCTP. One can recognise a Laminin EGF-like 5; first part domain in the interval 495 to 504; that stretch reads CFCFGHSSVC. Residues 514 to 689 form the Laminin IV type A domain; the sequence is SISSTFQIDE…PGVPATWVES (176 aa). N-linked (GlcNAc...) asparagine glycans are attached at residues Asn576 and Asn650. The Laminin EGF-like 5; second part domain occupies 690 to 723; it reads CTCPVGYGGQFCEMCLSGYRRETPNLGPYSPCVL. 24 disulfide bridges follow: Cys724–Cys733, Cys726–Cys740, Cys742–Cys751, Cys754–Cys770, Cys773–Cys781, Cys775–Cys792, Cys795–Cys804, Cys807–Cys825, Cys828–Cys842, Cys830–Cys849, Cys852–Cys861, Cys864–Cys881, Cys884–Cys898, Cys886–Cys905, Cys907–Cys916, Cys919–Cys932, Cys935–Cys947, Cys937–Cys954, Cys956–Cys965, Cys968–Cys980, Cys983–Cys995, Cys985–Cys1001, Cys1003–Cys1012, and Cys1015–Cys1028. Laminin EGF-like domains are found at residues 724–772, 773–827, 828–883, 884–934, 935–982, and 983–1030; these read CACN…DCQP, CPCP…LCRL, CQCS…KCKA, CNCN…GCER, CDCH…GCKP, and CDCH…GCQE. 2 N-linked (GlcNAc...) asparagine glycosylation sites follow: Asn1022 and Asn1107. Residues 1030–1609 are domain II and I; the sequence is ECPACYRLVK…CFNTPSIEKP (580 aa). Positions 1038-1609 form a coiled coil; sequence VKDKVADHRV…CFNTPSIEKP (572 aa). Position 1149 is a phosphoserine; by FAM20C (Ser1149). 8 N-linked (GlcNAc...) asparagine glycosylation sites follow: Asn1161, Asn1175, Asn1205, Asn1223, Asn1241, Asn1380, Asn1395, and Asn1439. Position 1493 is a phosphoserine (Ser1493).

In terms of assembly, laminin is a complex glycoprotein, consisting of three different polypeptide chains (alpha, beta, gamma), which are bound to each other by disulfide bonds into a cross-shaped molecule comprising one long and three short arms with globules at each end. Gamma-1 is a subunit of laminin-1 (laminin-111 or EHS laminin), laminin-2 (laminin-211 or merosin), laminin-3 (laminin-121 or S-laminin), laminin-4 (laminin-221 or S-merosin), laminin-6 (laminin-311 or K-laminin), laminin-7 (laminin-321 or KS-laminin), laminin-8 (laminin-411), laminin-9 (laminin-421), laminin-10 (laminin-511) and laminin-11 (laminin-521). Interacts with SVEP1. In terms of tissue distribution, found in the basement membranes (major component).

It localises to the secreted. It is found in the extracellular space. The protein resides in the extracellular matrix. Its subcellular location is the basement membrane. Its function is as follows. Binding to cells via a high affinity receptor, laminin is thought to mediate the attachment, migration and organization of cells into tissues during embryonic development by interacting with other extracellular matrix components. The chain is Laminin subunit gamma-1 from Homo sapiens (Human).